A 667-amino-acid polypeptide reads, in one-letter code: Protein OS-9 (667 aa).

The first 25 residues, Met1 to Thr25, serve as a signal peptide directing secretion. The region spanning Ala108–His230 is the MRH domain. Cys110 and Cys123 are disulfide-bonded. Residues Trp117, Trp118, and Gln130 each contribute to the a mannooligosaccharide derivative site. An N-linked (GlcNAc...) asparagine glycan is attached at Asn177. 2 cysteine pairs are disulfide-bonded: Cys181–Cys216 and Cys196–Cys228. The a mannooligosaccharide derivative site is built by Asp182, Arg188, Glu212, and Tyr218. 3 disordered regions span residues Gln262 to Glu450, Glu506 to Val541, and Glu636 to Phe667. Composition is skewed to basic and acidic residues over residues Ala263–Pro279, Glu304–Thr328, and Pro396–Pro408. Positions Gln410–Glu429 are enriched in acidic residues. A compositionally biased stretch (basic and acidic residues) spans Arg430–Glu450. Residues Lys514–Pro523 show a composition bias toward basic residues. Residues Glu636–Tyr647 are compositionally biased toward basic and acidic residues.

Belongs to the OS-9 family. As to quaternary structure, component of the HRD1 complex, which comprises at least SYNV1/HRD1, DERL1/2, FAM8A1, HERPUD1/HERP, OS9, SEL1L and UBE2J1. FAM8A1 is stabilized by interaction with SYNV1, which prevents its proteasomal degradation. OS9 and UBE2J1 recruitment to the complex may be mediated by SEL1L. Through this complex, may interact with ERLEC1 and HSPA5. Interacts (via C-terminus) with CPNE6 (via second C2 domain); this interaction occurs in a calcium-dependent manner in vitro. Interacts with CREB3. In terms of processing, intramolecular disulfide bonds.

It localises to the endoplasmic reticulum lumen. In terms of biological role, lectin component of the HRD1 complex, which functions in endoplasmic reticulum (ER) quality control and ER-associated degradation (ERAD). Specifically recognizes and binds improperly folded glycoproteins as well as hyperglycosylated proteins, retain them in the ER, and transfers them to the ubiquitination machinery and promote their degradation. Possible targets include TRPV4 as well as hyperglycosylated HSP90B1. The sequence is that of Protein OS-9 (OS9) from Bos taurus (Bovine).